The primary structure comprises 475 residues: MSVQEYLDKHMLSRKIEDAVNAAVRAKTSDPVLFIANHLKKAVSSVITKVKARQILDSRGIPTVEVDLHTNKGVFRASVPSGDSSGTYEAIELRDGDKGMYLGNSVAKAVKNINEKISEALIGMDPKLQGQIDQAMIDLDKTEKKSELGANAILAVSIAACKAGAAEKEVPLCKHLSDLSGRANMVLPVPAFTVLSGGKHASNTFAIQEIMILPIGASRFEEALQWGSETYHHLKAVISEKNGGLGCNVGEDGGLAPDISSLKEGLELVKEAINRTGYNDKIKIAIDIAATNFCLGTKYDLDIKSPNKSGQNFKSAEDMIDMYKEICNDYPIVSIEDPFDKEDWEHTKYFSSLGICQVVGDDLLMSNSKRVERAIQESSCNALLLKVNQIGTVTEAIEVVKMARDAQWGVVTSHRCGETEDSFISDLSVGLATGVIKAGAPCRGERTMKYNQLLRIEEELGDQAVYAGEDWKLSL.

Serine 2 is subject to N-acetylserine. Positions 200 and 209 each coordinate substrate. Aspartate 252 functions as the Proton donor in the catalytic mechanism. Residues aspartate 287, glutamate 336, and aspartate 361 each contribute to the Mg(2+) site. Glutamate 336 and aspartate 361 together coordinate substrate. The Proton acceptor role is filled by lysine 386. Residues 413–416 (SHRC) and lysine 437 contribute to the substrate site.

Belongs to the enolase family. As to quaternary structure, homodimer. The cofactor is Mg(2+).

The protein localises to the cytoplasm. It is found in the nucleus. It carries out the reaction (2R)-2-phosphoglycerate = phosphoenolpyruvate + H2O. Its pathway is carbohydrate degradation; glycolysis; pyruvate from D-glyceraldehyde 3-phosphate: step 4/5. The chain is Cytosolic enolase 3 (ENO3) from Arabidopsis thaliana (Mouse-ear cress).